The chain runs to 354 residues: Sphingosine-1-phosphate phosphatase 2 (354 aa).

4 helical membrane passes run 43–63 (YLFR…FLPF), 76–96 (LVVI…ILKW), 115–135 (YGMP…LLIS), and 140–160 (YQYP…LVCL). The phosphatase sequence motif I stretch occupies residues 91-99 (KDILKWPRP). Positions 118–121 (PSTH) are phosphatase sequence motif II. The Proton donor role is filled by H121. Residues 161 to 172 (SRLYTGMHTVLD) form a phosphatase sequence motif III region. H168 (nucleophile) is an active-site residue. 5 consecutive transmembrane segments (helical) span residues 173-193 (ILGG…AWTL), 202-222 (PLFP…YPVS), 235-255 (IVAA…FQLV), 273-293 (TDML…ILLV), and 334-354 (TSVG…LGLL).

This sequence belongs to the type 2 lipid phosphate phosphatase family. As to expression, highly expressed in pancreatic islets. Expressed in lung, small interstince, colon, kideny and brain.

It localises to the endoplasmic reticulum membrane. The catalysed reaction is sphinganine 1-phosphate + H2O = sphinganine + phosphate. It catalyses the reaction sphing-4-enine 1-phosphate + H2O = sphing-4-enine + phosphate. It carries out the reaction (4R)-hydroxysphinganine 1-phosphate + H2O = (4R)-hydroxysphinganine + phosphate. Functionally, has specific phosphohydrolase activity towards sphingoid base 1-phosphates. Has high phosphohydrolase activity against dihydrosphingosine-1-phosphate and sphingosine-1-phosphate (S1P) in vitro. Sphingosine-1-phosphate phosphatase activity is needed for efficient recycling of sphingosine into the sphingolipid synthesis pathway. May play a role in attenuating intracellular sphingosine 1-phosphate (S1P) signaling. May play a role in pro-inflammatory signaling. Plays a role in the regulation of pancreatic islet beta-cell endoplasmic reticulum stress and proliferation. This is Sphingosine-1-phosphate phosphatase 2 from Mus musculus (Mouse).